A 147-amino-acid chain; its full sequence is Hemoglobin subunit delta (147 aa).

Positions 3–147 constitute a Globin domain; that stretch reads NLTAAEKTQV…VANALAHKYH (145 aa). Positions 64 and 93 each coordinate heme b.

It belongs to the globin family. As to quaternary structure, heterotetramer of two delta chains and two alpha chains. As to expression, red blood cells.

The polypeptide is Hemoglobin subunit delta (HBD) (Elephas maximus (Indian elephant)).